The chain runs to 283 residues: Polyamine aminopropyltransferase (283 aa).

Positions 2 to 237 constitute a PABS domain; it reads ELWYTEEHTD…GHWLFGFASK (236 aa). Gln-31 lines the S-methyl-5'-thioadenosine pocket. Spermidine-binding residues include His-62 and Asp-86. S-methyl-5'-thioadenosine contacts are provided by residues Glu-106 and 137-138; that span reads DG. The active-site Proton acceptor is Asp-155. Residue 155 to 158 participates in spermidine binding; that stretch reads DSTD. S-methyl-5'-thioadenosine is bound at residue Pro-162.

The protein belongs to the spermidine/spermine synthase family. In terms of assembly, homodimer or homotetramer.

Its subcellular location is the cytoplasm. It catalyses the reaction S-adenosyl 3-(methylsulfanyl)propylamine + putrescine = S-methyl-5'-thioadenosine + spermidine + H(+). The protein operates within amine and polyamine biosynthesis; spermidine biosynthesis; spermidine from putrescine: step 1/1. In terms of biological role, catalyzes the irreversible transfer of a propylamine group from the amino donor S-adenosylmethioninamine (decarboxy-AdoMet) to putrescine (1,4-diaminobutane) to yield spermidine. This chain is Polyamine aminopropyltransferase, found in Clostridium perfringens (strain SM101 / Type A).